The sequence spans 273 residues: MTKLIIHLVSDSSVQTAKYAANSALAQFTSVKPKLYHWPMIRNLELLNEVLSKIEYKHGIVLYTIADQELRKTLTKFCYELKIPCISVIGKIIKEMSVFSGIEIEKEQNYNYKFDKTYFDTLNAIDYAIRHDDGQMLNELSEADIILIGPSRTSKTPTSVFLAYNGLKAANIPYVYNCPFPDFIEKDIDQLVVGLVINPNRLIEIREARLNLLQINENKSYTDFNIVQKECLEVRKICDQRNWPVIDVSTRSIEETAALIMRIYYNRKNKYNK.

An ADP-binding site is contributed by 149-156 (GPSRTSKT).

Belongs to the pyruvate, phosphate/water dikinase regulatory protein family. PDRP subfamily.

It catalyses the reaction N(tele)-phospho-L-histidyl/L-threonyl-[pyruvate, phosphate dikinase] + ADP = N(tele)-phospho-L-histidyl/O-phospho-L-threonyl-[pyruvate, phosphate dikinase] + AMP + H(+). The enzyme catalyses N(tele)-phospho-L-histidyl/O-phospho-L-threonyl-[pyruvate, phosphate dikinase] + phosphate + H(+) = N(tele)-phospho-L-histidyl/L-threonyl-[pyruvate, phosphate dikinase] + diphosphate. Its function is as follows. Bifunctional serine/threonine kinase and phosphorylase involved in the regulation of the pyruvate, phosphate dikinase (PPDK) by catalyzing its phosphorylation/dephosphorylation. The chain is Putative pyruvate, phosphate dikinase regulatory protein from Rickettsia rickettsii (strain Iowa).